The following is a 507-amino-acid chain: tRNA (guanine(10)-N(2))-methyltransferase TRMT11 (507 aa).

Residues 459–475 (EKTKKKEQKKKSVENHL) are compositionally biased toward basic and acidic residues. A disordered region spans residues 459-507 (EKTKKKEQKKKSVENHLKSKNNNDVINNNSNDTNSNNNCNNENNIENQK). Residues 480-507 (NNDVINNNSNDTNSNNNCNNENNIENQK) are compositionally biased toward low complexity.

It belongs to the class I-like SAM-binding methyltransferase superfamily. TRM11 methyltransferase family. Part of the heterodimeric TRMT11-TRM112 methyltransferase complex; this complex forms an active tRNA methyltransferase, where TRMT112 acts as an activator of the catalytic subunit TRMT11.

The protein resides in the cytoplasm. It catalyses the reaction guanosine(10) in tRNA + S-adenosyl-L-methionine = N(2)-methylguanosine(10) in tRNA + S-adenosyl-L-homocysteine + H(+). In terms of biological role, catalytic subunit of the TRMT11-TRM112 methyltransferase complex, that specifically mediates the S-adenosyl-L-methionine-dependent N(2)-methylation of guanosine nucleotide at position 10 (m2G10) in tRNAs. This is one of the major tRNA (guanine-N(2))-methyltransferases. The chain is tRNA (guanine(10)-N(2))-methyltransferase TRMT11 (trmt11) from Dictyostelium discoideum (Social amoeba).